The primary structure comprises 184 residues: Gastrokine-1 (184 aa).

The signal sequence occupies residues 1 to 20; sequence MKLTMFVVGLLGLLAAPGFA. A BRICHOS domain is found at 54–148; it reads NNGWDSWNSL…MCRGIPTYVA (95 aa). Residues C81 and C140 are joined by a disulfide bond.

The protein belongs to the gastrokine family. Expressed in the stomach. Highly expressed specifically in surface cells of the antrum mucosa from where it is secreted.

Its subcellular location is the secreted. It is found in the cytoplasmic granule. The protein localises to the golgi apparatus. Its function is as follows. Has mitogenic activity and may be involved in maintaining the integrity of the gastric mucosal epithelium. This is Gastrokine-1 (Gkn1) from Mus musculus (Mouse).